A 98-amino-acid chain; its full sequence is MDARDIILRPVVTEKSMNLMDDKKYTFDVLVSATKTQVRNAIEEIFDVKVKNVNIMNVRGKEKRVGRYTGKTARRRKAIVTLTEDSNDIKIFNDNKEN.

Belongs to the universal ribosomal protein uL23 family. As to quaternary structure, part of the 50S ribosomal subunit. Contacts protein L29, and trigger factor when it is bound to the ribosome.

In terms of biological role, one of the early assembly proteins it binds 23S rRNA. One of the proteins that surrounds the polypeptide exit tunnel on the outside of the ribosome. Forms the main docking site for trigger factor binding to the ribosome. This Lactobacillus johnsonii (strain CNCM I-12250 / La1 / NCC 533) protein is Large ribosomal subunit protein uL23.